Reading from the N-terminus, the 124-residue chain is UPF0344 protein OB1184 (124 aa).

The next 4 helical transmembrane spans lie at 3 to 23, 33 to 53, 62 to 82, and 104 to 124; these read HMHI…LVMY, IIHM…GILT, MPIL…VAMM, and IALV…FLFI.

The protein belongs to the UPF0344 family.

It is found in the cell membrane. The polypeptide is UPF0344 protein OB1184 (Oceanobacillus iheyensis (strain DSM 14371 / CIP 107618 / JCM 11309 / KCTC 3954 / HTE831)).